We begin with the raw amino-acid sequence, 395 residues long: Flap endonuclease 1 (395 aa).

Residues 1–108 (MGILGLSKLL…DELETRRQKA (108 aa)) form an N-domain region. Residue D34 participates in Mg(2+) binding. Residue R74 coordinates DNA. Mg(2+)-binding residues include D90, E162, E164, D183, and D185. The segment at 126 to 257 (MMEKMSKRTV…QRAWEGIQRY (132 aa)) is I-domain. Residue E162 participates in DNA binding. The DNA site is built by G235 and D237. D237 contacts Mg(2+). The interaction with PCNA stretch occupies residues 340 to 348 (TQGRLDNFF).

This sequence belongs to the XPG/RAD2 endonuclease family. FEN1 subfamily. Interacts with PCNA. Three molecules of FEN1 bind to one PCNA trimer with each molecule binding to one PCNA monomer. PCNA stimulates the nuclease activity without altering cleavage specificity. Requires Mg(2+) as cofactor. Post-translationally, phosphorylated. Phosphorylation upon DNA damage induces relocalization to the nuclear plasma.

The protein localises to the nucleus. It localises to the nucleolus. The protein resides in the nucleoplasm. Its subcellular location is the mitochondrion. In terms of biological role, structure-specific nuclease with 5'-flap endonuclease and 5'-3' exonuclease activities involved in DNA replication and repair. During DNA replication, cleaves the 5'-overhanging flap structure that is generated by displacement synthesis when DNA polymerase encounters the 5'-end of a downstream Okazaki fragment. It enters the flap from the 5'-end and then tracks to cleave the flap base, leaving a nick for ligation. Also involved in the long patch base excision repair (LP-BER) pathway, by cleaving within the apurinic/apyrimidinic (AP) site-terminated flap. Acts as a genome stabilization factor that prevents flaps from equilibrating into structures that lead to duplications and deletions. Also possesses 5'-3' exonuclease activity on nicked or gapped double-stranded DNA, and exhibits RNase H activity. Also involved in replication and repair of rDNA and in repairing mitochondrial DNA. This is Flap endonuclease 1 from Leishmania braziliensis.